Reading from the N-terminus, the 533-residue chain is Cytochrome P450 monooxygenase calL (533 aa).

The chain crosses the membrane as a helical span at residues 8-28 (TQLALLVWGIAVCVTLAIVVP). Asparagine 33 is a glycosylation site (N-linked (GlcNAc...) asparagine). Residues 123 to 148 (GKFKQDQSGRSKNPVPGHDVKPGQPR) form a disordered region. N-linked (GlcNAc...) asparagine glycosylation is present at asparagine 388. Cysteine 467 serves as a coordination point for heme.

The protein belongs to the cytochrome P450 family. Heme is required as a cofactor.

It localises to the membrane. It functions in the pathway secondary metabolite biosynthesis. In terms of biological role, cytochrome P450 monooxygenase; part of the gene cluster that mediates the biosynthesis of calbistrin A and related compounds. Calbistrin A is a secondary metabolite with an interesting structure that was recently found to have bioactivity against leukemia cells. It consists of two polyketides linked by an ester bond: a bicyclic decalin containing polyketide and a linear 12 carbon dioic acid structure. The polyketide synthase calA is probably responsible for forming the decalin moiety. Because calA lacks a designated enoylreductase (ER) domain, the required activity is provided by the trans-enoyl reductase calK. Following release from the PKS, calF then probably catalyzes the oxidation and the subsequent Diels Alder cycloisomerization that lead to the formation of the decalin moiety. The decalin polyketide backbone includes two C-methyl groups, at C7 and C11 in backbone, of which the C7 position is probably methylated by the methyltransferase domain of calA. A candidate for adding the methyl group at C11, if not done by CalA, is the cluster methyltransferase calH. Several additional tailoring enzymes within the cluster could be involved in the modification of the decalin polyketide product. Those include the 3 cytochrome P450 monooxygenases CalE, CalG and CalL, of which one might be responsible for the introduction of the extra hydroxyl group attached to the backbone of the decalin moiety, at position C9 in the backbone, that allows for attachment of the linear moiety. One tailoring enzyme activity that is expected to be involved in biosynthesis of calbistrin is an acyltransferase for connecting the two polyketide synthase products, and which could be performed by the cluster acyltransferase calJ. The enzyme responsible for the biosynthesis of the linear moiety, probably a second PKS, has not been identified yet. In Penicillium decumbens, this protein is Cytochrome P450 monooxygenase calL.